A 585-amino-acid polypeptide reads, in one-letter code: Pyruvate kinase (585 aa).

Arginine 32 serves as a coordination point for substrate. K(+)-binding residues include asparagine 34, serine 36, aspartate 66, and threonine 67. Residue 34–37 coordinates ATP; it reads NFSH. Residues arginine 73 and lysine 156 each contribute to the ATP site. Glutamate 221 is a binding site for Mg(2+). Residues glycine 244, aspartate 245, and threonine 277 each coordinate substrate. Aspartate 245 is a binding site for Mg(2+).

The protein belongs to the pyruvate kinase family. In the C-terminal section; belongs to the PEP-utilizing enzyme family. The cofactor is Mg(2+). Requires K(+) as cofactor.

The catalysed reaction is pyruvate + ATP = phosphoenolpyruvate + ADP + H(+). The protein operates within carbohydrate degradation; glycolysis; pyruvate from D-glyceraldehyde 3-phosphate: step 5/5. In Staphylococcus epidermidis (strain ATCC 35984 / DSM 28319 / BCRC 17069 / CCUG 31568 / BM 3577 / RP62A), this protein is Pyruvate kinase (pyk).